The chain runs to 150 residues: Urease accessory protein UreE (150 aa).

The protein belongs to the UreE family.

It is found in the cytoplasm. Its function is as follows. Involved in urease metallocenter assembly. Binds nickel. Probably functions as a nickel donor during metallocenter assembly. This chain is Urease accessory protein UreE, found in Staphylococcus carnosus (strain TM300).